We begin with the raw amino-acid sequence, 223 residues long: Small ribosomal subunit protein uS3 (223 aa).

A KH type-2 domain is found at L38–N106.

This sequence belongs to the universal ribosomal protein uS3 family. As to quaternary structure, part of the 30S ribosomal subunit. Forms a tight complex with proteins S10 and S14.

Binds the lower part of the 30S subunit head. Binds mRNA in the 70S ribosome, positioning it for translation. This chain is Small ribosomal subunit protein uS3, found in Acidobacterium capsulatum (strain ATCC 51196 / DSM 11244 / BCRC 80197 / JCM 7670 / NBRC 15755 / NCIMB 13165 / 161).